The chain runs to 151 residues: Neuroglobin (151 aa).

Positions 1–149 (MERPEPELIR…VVQAMSRGWD (149 aa)) constitute a Globin domain. Heme b is bound by residues His64 and His96.

It belongs to the globin family. As to quaternary structure, monomer. Homodimer and homotetramer; disulfide-linked. Mainly monomeric but also detected as part of homodimers and homotetramers. Interacts with 14-3-3 proteins; regulates the phosphorylation of NGB. Could interact (ferrous form) with G-alpha(i) proteins (GTP-bound form). In terms of processing, phosphorylated during hypoxia by ERK1/ERK2. Phosphorylation regulates the heme pocket hexacoordination preventing the association of His-64 with the heme metal center. Thereby, promotes the access of dioxygen and nitrite to the heme and stimulates the nitrite reductase activity. Phosphorylation during hypoxia is stabilized by 14-3-3 proteins.

The protein resides in the cytoplasm. The protein localises to the cytosol. Its subcellular location is the mitochondrion matrix. It carries out the reaction Fe(III)-heme b-[protein] + nitric oxide + H2O = Fe(II)-heme b-[protein] + nitrite + 2 H(+). Monomeric globin with a bis-histidyl six-coordinate heme-iron atom through which it can bind dioxygen, carbon monoxide and nitric oxide. Could help transport oxygen and increase its availability to the metabolically active neuronal tissues, though its low quantity in tissues as well as its high affinity for dioxygen, which may limit its oxygen-releasing ability, argue against it. The ferrous/deoxygenated form exhibits a nitrite reductase activity and it could produce nitric oxide which in turn inhibits cellular respiration in response to hypoxia. In its ferrous/deoxygenated state, it may also exhibit GDI (Guanine nucleotide Dissociation Inhibitor) activity toward heterotrimeric G-alpha proteins, thereby regulating signal transduction to facilitate neuroprotective responses in the wake of hypoxia and associated oxidative stress. The chain is Neuroglobin from Macaca mulatta (Rhesus macaque).